Consider the following 476-residue polypeptide: MVRFESTDSLMLARQLPNKTVALILAGGRGSRLKDLTATRAKPAVHFGGKFRIIDFALSNCLNSGVRRIGVITQYQSHTLVQHIQRGWSFLNEEMNEFVDLLPAQQRLSTEQWYKGTADAVCQNLDIIRRYDAEYIVILAGDHIYKMDYSRMLLDHVEKGAECTVACIPVPISEGSEFGIMEVTADYQITAFYEKPANPPPIPGDPSNALASMGIYIFNADYLFKLLEEDNNTPGSSHDFGKDIIPQLTARKVVWAHPFDLSCVTSNAELPPYWRDVGTLDAYWRANLDLASVTPELDMYDRAWPIRTHMEPLPPAKFVQDRSGSHGMTMNSLVSGGCIVSGSVVVHSVLFPRVRVNSFCTIDSSLLLPDVHVGRSCRLRRCIIDRACHIPEGMVIGENADEDSARFYRSEGGGGVSDSGYAGKVRGKIEPLGFLFVRLDLLIRLSLLIRLNLFIRMNLLIILTLFFKLASIQASH.

Alpha-D-glucose 1-phosphate-binding positions include Tyr114, Gly179, 194 to 195 (EK), and Ser212.

It belongs to the bacterial/plant glucose-1-phosphate adenylyltransferase family. Homotetramer.

The catalysed reaction is alpha-D-glucose 1-phosphate + ATP + H(+) = ADP-alpha-D-glucose + diphosphate. Its pathway is glycan biosynthesis; glycogen biosynthesis. In terms of biological role, involved in the biosynthesis of ADP-glucose, a building block required for the elongation reactions to produce glycogen. Catalyzes the reaction between ATP and alpha-D-glucose 1-phosphate (G1P) to produce pyrophosphate and ADP-Glc. This is Glucose-1-phosphate adenylyltransferase from Yersinia pestis.